Reading from the N-terminus, the 83-residue chain is Small ribosomal subunit protein bS20 (83 aa).

This sequence belongs to the bacterial ribosomal protein bS20 family.

Functionally, binds directly to 16S ribosomal RNA. In Lactobacillus delbrueckii subsp. bulgaricus (strain ATCC 11842 / DSM 20081 / BCRC 10696 / JCM 1002 / NBRC 13953 / NCIMB 11778 / NCTC 12712 / WDCM 00102 / Lb 14), this protein is Small ribosomal subunit protein bS20.